The chain runs to 145 residues: SsrA-binding protein (145 aa).

The protein belongs to the SmpB family.

Its subcellular location is the cytoplasm. Functionally, required for rescue of stalled ribosomes mediated by trans-translation. Binds to transfer-messenger RNA (tmRNA), required for stable association of tmRNA with ribosomes. tmRNA and SmpB together mimic tRNA shape, replacing the anticodon stem-loop with SmpB. tmRNA is encoded by the ssrA gene; the 2 termini fold to resemble tRNA(Ala) and it encodes a 'tag peptide', a short internal open reading frame. During trans-translation Ala-aminoacylated tmRNA acts like a tRNA, entering the A-site of stalled ribosomes, displacing the stalled mRNA. The ribosome then switches to translate the ORF on the tmRNA; the nascent peptide is terminated with the 'tag peptide' encoded by the tmRNA and targeted for degradation. The ribosome is freed to recommence translation, which seems to be the essential function of trans-translation. The polypeptide is SsrA-binding protein (Mesomycoplasma hyopneumoniae (strain 232) (Mycoplasma hyopneumoniae)).